Here is a 499-residue protein sequence, read N- to C-terminus: Probable dipeptidase B (499 aa).

Residue C26 is part of the active site.

This sequence belongs to the peptidase C69 family.

It carries out the reaction an L-aminoacyl-L-amino acid + H2O = 2 an L-alpha-amino acid. The chain is Probable dipeptidase B (pepDB) from Streptococcus pyogenes serotype M6 (strain ATCC BAA-946 / MGAS10394).